We begin with the raw amino-acid sequence, 138 residues long: Centromere protein S (138 aa).

Residue methionine 1 is modified to N-acetylmethionine. The interval 112 to 138 (AKKKKKLEDENRNSVESAEAGVEESEN) is disordered.

It belongs to the TAF9 family. CENP-S/MHF1 subfamily. As to quaternary structure, heterodimer with CENPX, sometimes called MHF; this interaction stabilizes both partners. MHF heterodimers can assemble to form tetrameric structures. MHF also coassemble with CENPT-CENPW heterodimers at centromeres to form the tetrameric CENP-T-W-S-X complex. Forms a discrete complex with FANCM and CENPX, called FANCM-MHF; this interaction, probably mediated by direct binding between CENPS and FANCM, leads to synergistic activation of double-stranded DNA binding and strongly stimulates FANCM-mediated DNA remodeling. Recruited by FANCM to the Fanconi anemia (FA) core complex, which consists of CENPS, CENPX, FANCA, FANCB, FANCC, FANCE, FANCF, FANCG, FANCL, FANCM, FAAP24 and FAAP100. The FA core complex associates with Bloom syndrome (BLM) complex, which consists of at least BLM, DNA topoisomerase 3-alpha (TOP3A), RMI1/BLAP75, RPA1/RPA70 and RPA2/RPA32. The super complex between FA and BLM is called BRAFT. Component of the CENPA-CAD complex, composed of CENPI, CENPK, CENPL, CENPO, CENPP, CENPQ, CENPR and CENPS. The CENPA-CAD complex is probably recruited on centromeres by the CENPA-NAC complex, at least composed of CENPA, CENPC, CENPH, CENPM, CENPN, CENPT and CENPU.

Its subcellular location is the nucleus. It localises to the chromosome. The protein localises to the centromere. The protein resides in the kinetochore. DNA-binding component of the Fanconi anemia (FA) core complex. Required for the normal activation of the FA pathway, leading to monoubiquitination of the FANCI-FANCD2 complex in response to DNA damage, cellular resistance to DNA cross-linking drugs, and prevention of chromosomal breakage. In complex with CENPX (MHF heterodimer), crucial cofactor for FANCM in both binding and ATP-dependent remodeling of DNA. Stabilizes FANCM. In complex with CENPX and FANCM (but not other FANC proteins), rapidly recruited to blocked forks and promotes gene conversion at blocked replication forks. In complex with CENPT, CENPW and CENPX (CENP-T-W-S-X heterotetramer), involved in the formation of a functional kinetochore outer plate, which is essential for kinetochore-microtubule attachment and faithful mitotic progression. As a component of MHF and CENP-T-W-S-X complexes, binds DNA and bends it to form a nucleosome-like structure. DNA-binding function is fulfilled in the presence of CENPX, with the following preference for DNA substates: Holliday junction &gt; double-stranded &gt; splay arm &gt; single-stranded. Does not bind DNA on its own. The polypeptide is Centromere protein S (CENPS) (Bos taurus (Bovine)).